Reading from the N-terminus, the 360-residue chain is Histidinol-phosphate aminotransferase (360 aa).

Residue Lys-218 is modified to N6-(pyridoxal phosphate)lysine.

It belongs to the class-II pyridoxal-phosphate-dependent aminotransferase family. Histidinol-phosphate aminotransferase subfamily. In terms of assembly, homodimer. Requires pyridoxal 5'-phosphate as cofactor.

It carries out the reaction L-histidinol phosphate + 2-oxoglutarate = 3-(imidazol-4-yl)-2-oxopropyl phosphate + L-glutamate. The protein operates within amino-acid biosynthesis; L-histidine biosynthesis; L-histidine from 5-phospho-alpha-D-ribose 1-diphosphate: step 7/9. The sequence is that of Histidinol-phosphate aminotransferase from Pelagibacter ubique (strain HTCC1062).